Reading from the N-terminus, the 259-residue chain is UPF0246 protein VF_2109 (259 aa).

This sequence belongs to the UPF0246 family.

The protein is UPF0246 protein VF_2109 of Aliivibrio fischeri (strain ATCC 700601 / ES114) (Vibrio fischeri).